The chain runs to 175 residues: Lithostathine (175 aa).

Residues 1 to 26 (MLPSLGLPRLSWMLLSCLMLLSQIQG) form the signal peptide. Positions 27 to 37 (ENSQKELPSAR) are excised as a propeptide. The C-type lectin domain maps to 38-173 (ISCPSGSMAY…NLNLPYVCKF (136 aa)). 3 disulfides stabilise this stretch: cysteine 40/cysteine 51, cysteine 68/cysteine 171, and cysteine 146/cysteine 163.

In terms of assembly, cleaved to give an A chain and a B chain joined by a disulfide bond. As to expression, in pancreatic acinar cells.

The protein localises to the secreted. Functionally, might act as an inhibitor of spontaneous calcium carbonate precipitation. The chain is Lithostathine (PTP) from Bos taurus (Bovine).